Reading from the N-terminus, the 550-residue chain is Hydroxylamine reductase (550 aa).

Residues C3, C6, C18, and C25 each contribute to the [2Fe-2S] cluster site. The hybrid [4Fe-2O-2S] cluster site is built by H249, E273, C317, C405, C433, C458, E492, and K494. C405 is modified (cysteine persulfide).

It belongs to the HCP family. [2Fe-2S] cluster is required as a cofactor. Hybrid [4Fe-2O-2S] cluster serves as cofactor.

The protein resides in the cytoplasm. It catalyses the reaction A + NH4(+) + H2O = hydroxylamine + AH2 + H(+). Functionally, catalyzes the reduction of hydroxylamine to form NH(3) and H(2)O. In Salmonella gallinarum (strain 287/91 / NCTC 13346), this protein is Hydroxylamine reductase.